Consider the following 143-residue polypeptide: AP-4 complex subunit sigma (143 aa).

It belongs to the adaptor complexes small subunit family. As to quaternary structure, adaptor protein complex 4 (AP-4) is a heterotetramer composed of two large adaptins (epsilon-type subunit and beta-type subunit), a medium adaptin (mu-type subunit) and a small adaptin (sigma-type subunit). Interacts with EHD2.

The protein resides in the golgi apparatus. It is found in the trans-Golgi network. It localises to the membrane. Its subcellular location is the coated pit. Subunit of novel type of clathrin- or non-clathrin-associated protein coat involved in targeting proteins from the trans-Golgi network (TGN) to the endosomal-lysosomal system. The polypeptide is AP-4 complex subunit sigma (Arabidopsis thaliana (Mouse-ear cress)).